The primary structure comprises 427 residues: O-methyltransferase sol2 (427 aa).

Position 281 (D281) interacts with S-adenosyl-L-methionine. H327 (proton acceptor) is an active-site residue.

Belongs to the class I-like SAM-binding methyltransferase superfamily. Cation-independent O-methyltransferase family. COMT subfamily.

It functions in the pathway phytotoxin biosynthesis. O-methyltransferase; part of the gene cluster that mediates the biosynthesis of the phytotoxin solanapyrone, a causal agent of early blight disease of potato and tomato. The prosolanapyrone synthase sol1 is a polyketide synthase that produces the octaketide desmethylprosolanapyrone I via sequential condensations of 7 malonyl-CoA units with one acetyl-CoA unit, and one methylation step. The octaketide backbone is further methylated by the sol2 O-methyltransferase to yield prosolanapyrone I. Prosolanapyrone I is hydroxylated to prosolanapyrone II by the cytochrome P450 monooxygenase sol6. The solanapyrone synthase sol5 then catalyzes the oxidation of prosolanapyrone II and the subsequent Diels Alder cycloisomerization of the product prosolanapyrone III to solanapyrones A and D. Solanapyrones A and D are then converted into solanapyrones B and E, respectively, by the sol3 dehydrogenase. The sequence is that of O-methyltransferase sol2 (sol2) from Alternaria solani.